The chain runs to 125 residues: Interleukin-6 (125 aa).

Cys-16 and Cys-26 are joined by a disulfide.

The protein belongs to the IL-6 superfamily. In terms of assembly, component of a hexamer of two molecules each of IL6, IL6R and IL6ST; first binds to IL6R to associate with the signaling subunit IL6ST. Interacts with IL6R (via the N-terminal ectodomain); this interaction may be affected by IL6R-binding with SORL1, hence decreasing IL6 cis signaling. Interacts with SORL1 (via the N-terminal ectodomain); this interaction leads to IL6 internalization and lysosomal degradation. May form a trimeric complex with the soluble SORL1 ectodomain and soluble IL6R receptor; this interaction might stabilize circulating IL6, hence promoting IL6 trans signaling.

It is found in the secreted. Cytokine with a wide variety of biological functions in immunity, tissue regeneration, and metabolism. Binds to IL6R, then the complex associates to the signaling subunit IL6ST/gp130 to trigger the intracellular IL6-signaling pathway. The interaction with the membrane-bound IL6R and IL6ST stimulates 'classic signaling', whereas the binding of IL6 and soluble IL6R to IL6ST stimulates 'trans-signaling'. Alternatively, 'cluster signaling' occurs when membrane-bound IL6:IL6R complexes on transmitter cells activate IL6ST receptors on neighboring receiver cells. In terms of biological role, IL6 is a potent inducer of the acute phase response. Rapid production of IL6 contributes to host defense during infection and tissue injury, but excessive IL6 synthesis is involved in disease pathology. In the innate immune response, is synthesized by myeloid cells, such as macrophages and dendritic cells, upon recognition of pathogens through toll-like receptors (TLRs) at the site of infection or tissue injury. In the adaptive immune response, is required for the differentiation of B cells into immunoglobulin-secreting cells. Plays a major role in the differentiation of CD4(+) T cell subsets. Essential factor for the development of T follicular helper (Tfh) cells that are required for the induction of germinal-center formation. Required to drive naive CD4(+) T cells to the Th17 lineage. Also required for proliferation of myeloma cells and the survival of plasmablast cells. Functionally, acts as an essential factor in bone homeostasis and on vessels directly or indirectly by induction of VEGF, resulting in increased angiogenesis activity and vascular permeability. Induces, through 'trans-signaling' and synergistically with IL1B and TNF, the production of VEGF. Involved in metabolic controls, is discharged into the bloodstream after muscle contraction increasing lipolysis and improving insulin resistance. 'Trans-signaling' in central nervous system also regulates energy and glucose homeostasis. Mediates, through GLP-1, crosstalk between insulin-sensitive tissues, intestinal L cells and pancreatic islets to adapt to changes in insulin demand. Also acts as a myokine. Plays a protective role during liver injury, being required for maintenance of tissue regeneration. Also has a pivotal role in iron metabolism by regulating HAMP/hepcidin expression upon inflammation or bacterial infection. Through activation of IL6ST-YAP-NOTCH pathway, induces inflammation-induced epithelial regeneration. This chain is Interleukin-6 (IL6), found in Neovison vison (American mink).